The following is a 192-amino-acid chain: Peptidyl-tRNA hydrolase (192 aa).

Tyr16 contacts tRNA. His21 acts as the Proton acceptor in catalysis. TRNA is bound by residues Tyr66 and Asn68.

It belongs to the PTH family. Monomer.

It localises to the cytoplasm. It catalyses the reaction an N-acyl-L-alpha-aminoacyl-tRNA + H2O = an N-acyl-L-amino acid + a tRNA + H(+). In terms of biological role, hydrolyzes ribosome-free peptidyl-tRNAs (with 1 or more amino acids incorporated), which drop off the ribosome during protein synthesis, or as a result of ribosome stalling. Its function is as follows. Catalyzes the release of premature peptidyl moieties from peptidyl-tRNA molecules trapped in stalled 50S ribosomal subunits, and thus maintains levels of free tRNAs and 50S ribosomes. The protein is Peptidyl-tRNA hydrolase of Aquifex aeolicus (strain VF5).